The sequence spans 394 residues: Obg-like ATPase 1 (394 aa).

The OBG-type G domain occupies 25–282 (LKIGIVGLPN…MPPDEAAKYC (258 aa)). ATP is bound by residues 34-39 (NVGKST), 56-60 (FCTID), and 94-97 (DIAG). Positions 38 and 58 each coordinate Mg(2+). Phenylalanine 129 is a binding site for GTP. Residues 230 to 231 (NM), methionine 231, and 263 to 265 (SCA) each bind ATP. 263–265 (SCA) contributes to the GTP binding site. Residues 303-386 (HLIYFFTAGP…QDADIIFFKF (84 aa)) enclose the TGS domain.

The protein belongs to the TRAFAC class OBG-HflX-like GTPase superfamily. OBG GTPase family. YchF/OLA1 subfamily. Monomer (Potential). Interacts with GAP1. Mg(2+) is required as a cofactor.

It is found in the cytoplasm. The protein resides in the cell membrane. The protein localises to the cytosol. With respect to regulation, activated by GAP1. Functionally, hydrolyzes ATP, and can also hydrolyze GTP with lower efficiency. Has lower affinity for GTP (Potential). Exhibits GTPase activity. Exhibits similar binding affinities and hydrolytic activities toward both GTP and ATP. Binds to the 26 S ribosomal RNA in vitro, but not to the 5.8 S or 18 S rRNA. Confers sensitivity to salinity stress by suppressing the anti-oxidation enzymatic activities and increasing lipid peroxidation thus leading to the accumulation of reactive oxygen species (ROS). The sequence is that of Obg-like ATPase 1 from Oryza sativa subsp. indica (Rice).